Here is a 461-residue protein sequence, read N- to C-terminus: MVSVSKLINNGLLLTSQSVFQDVATPQQASVQQYNILNFLGGSAPYIQRNGYGISTDIPAGCEIAQIQLYSRHGERYPSKSNGKSLEAIYAKFKNYNGTFKGDLSFLNDYTYFVKDQSNYAKETSPKNSEGTYAGTTNALRHGAAFRAKYGSLYKENSTLPIFTSNSNRVHETSKYFARGFLGDDYEEGKTVKFNIISEDADVGANSLTPRSACSKNKESSSSTAKKYNTTYLNAIAERLVKPNPGLNLTTSDVNNLFSWCAYEINVRGSSPFCDLFTNEEFIKNSYGNDLSKYYSNGAGNNYTRIIGSVILNSSLELLKDTENSNQVWLSFAHDTDLEIFHSALGLLEPAEDLPTSYIPFPNPYVHSSIVPQGARIYTEKLQCGNDAYVRYIINDAVVPIPKCATGPGFSCKLDDFENFVKERIGDVDFIKQCGVNSTYPSELTFYWDYKNVTYNAPLEL.

Intrachain disulfides connect C62-C384, C261-C274, and C404-C412. Residues R72, H73, R76, and S79 each contribute to the 1D-myo-inositol hexakisphosphate site. The active-site Nucleophile is H73. 2 N-linked (GlcNAc...) asparagine glycosylation sites follow: N97 and N157. Position 169 (R169) interacts with 1D-myo-inositol hexakisphosphate. Residues N229 and N248 are each glycosylated (N-linked (GlcNAc...) asparagine). K293 is a 1D-myo-inositol hexakisphosphate binding site. N-linked (GlcNAc...) asparagine glycosylation is found at N302 and N313. 2 residues coordinate 1D-myo-inositol hexakisphosphate: H334 and D335. N-linked (GlcNAc...) asparagine glycosylation is found at N437 and N452.

Belongs to the histidine acid phosphatase family. In terms of assembly, monomer.

It localises to the secreted. It carries out the reaction 1D-myo-inositol hexakisphosphate + H2O = 1D-myo-inositol 1,2,4,5,6-pentakisphosphate + phosphate. It catalyses the reaction 1D-myo-inositol 1,2,4,5,6-pentakisphosphate + H2O = 1D-myo-inositol 1,2,5,6-tetrakisphosphate + phosphate. The catalysed reaction is 1D-myo-inositol 1,2,5,6-tetrakisphosphate + H2O = 1D-myo-inositol 1,2,6-trisphosphate + phosphate. The enzyme catalyses 1D-myo-inositol 1,2,6-trisphosphate + H2O = 1D-myo-inositol 1,2-bisphosphate + phosphate. It carries out the reaction 1D-myo-inositol 1,2-bisphosphate + H2O = 1D-myo-inositol 2-phosphate + phosphate. In terms of biological role, catalyzes the phosphate monoester hydrolysis of phytic acid (myo-inositol hexakisphosphate), which results in the stepwise formation of myo-inositol pentakis-, tetrakis-, tris-, bis-, and monophosphates, as well as the liberation of inorganic phosphate. Myo-inositol 2-monophosphate is the end product. Responsible of about 25% of the phytase activity. The residual phytase activity might be contributed by other cytosolic or cellular enzymes such as acid phosphatase that also degraded the substrate phytate. Is essential for human tissue damage during infection. This chain is Phytase PHO112 (PHO112), found in Candida albicans (strain SC5314 / ATCC MYA-2876) (Yeast).